Reading from the N-terminus, the 292-residue chain is Pyridoxal 5'-phosphate synthase subunit PdxS (292 aa).

Residue Asp22 coordinates D-ribose 5-phosphate. Lys79 acts as the Schiff-base intermediate with D-ribose 5-phosphate in catalysis. Gly151 contributes to the D-ribose 5-phosphate binding site. A D-glyceraldehyde 3-phosphate-binding site is contributed by Arg163. D-ribose 5-phosphate is bound by residues Gly212 and 233–234 (GS).

The protein belongs to the PdxS/SNZ family. As to quaternary structure, in the presence of PdxT, forms a dodecamer of heterodimers.

The catalysed reaction is aldehydo-D-ribose 5-phosphate + D-glyceraldehyde 3-phosphate + L-glutamine = pyridoxal 5'-phosphate + L-glutamate + phosphate + 3 H2O + H(+). It participates in cofactor biosynthesis; pyridoxal 5'-phosphate biosynthesis. Functionally, catalyzes the formation of pyridoxal 5'-phosphate from ribose 5-phosphate (RBP), glyceraldehyde 3-phosphate (G3P) and ammonia. The ammonia is provided by the PdxT subunit. Can also use ribulose 5-phosphate and dihydroxyacetone phosphate as substrates, resulting from enzyme-catalyzed isomerization of RBP and G3P, respectively. The protein is Pyridoxal 5'-phosphate synthase subunit PdxS of Ruminiclostridium cellulolyticum (strain ATCC 35319 / DSM 5812 / JCM 6584 / H10) (Clostridium cellulolyticum).